A 301-amino-acid chain; its full sequence is Protein SCO2, mitochondrial (301 aa).

A helical membrane pass occupies residues 82-98; the sequence is ATIALLLLSGGTYAYLS. A Thioredoxin domain is found at 101–284; that stretch reads RRLLETEKEA…IREQIQAYVP (184 aa). Cu cation is bound by residues Cys154, Cys158, and His245.

The protein belongs to the SCO1/2 family.

The protein localises to the mitochondrion inner membrane. In terms of biological role, acts as a copper chaperone, transporting copper to the Cu(A) site on the cytochrome c oxidase subunit II (COX2). The chain is Protein SCO2, mitochondrial (SCO2) from Saccharomyces cerevisiae (strain ATCC 204508 / S288c) (Baker's yeast).